The sequence spans 57 residues: Granulin-3 (57 aa).

2 disulfides stabilise this stretch: Cys-4–Cys-16 and Cys-10–Cys-26.

Belongs to the granulin family. Granulins are disulfide bridged. As to expression, ubiquitous.

It localises to the secreted. Its function is as follows. Granulins have possible cytokine-like activity. They may play a role in inflammation, wound repair, and tissue remodeling. This Cyprinus carpio (Common carp) protein is Granulin-3.